The following is a 117-amino-acid chain: Flagellar transcriptional regulator FlhD (117 aa).

Belongs to the FlhD family. In terms of assembly, homodimer; disulfide-linked. Forms a heterohexamer composed of two FlhC and four FlhD subunits. Each FlhC binds a FlhD dimer, forming a heterotrimer, and a hexamer assembles by dimerization of two heterotrimers.

The protein localises to the cytoplasm. Functionally, functions in complex with FlhC as a master transcriptional regulator that regulates transcription of several flagellar and non-flagellar operons by binding to their promoter region. Activates expression of class 2 flagellar genes, including fliA, which is a flagellum-specific sigma factor that turns on the class 3 genes. Also regulates genes whose products function in a variety of physiological pathways. This is Flagellar transcriptional regulator FlhD from Photorhabdus laumondii subsp. laumondii (strain DSM 15139 / CIP 105565 / TT01) (Photorhabdus luminescens subsp. laumondii).